Here is a 134-residue protein sequence, read N- to C-terminus: Profilin-1 (134 aa).

A disulfide bridge connects residues cysteine 13 and cysteine 118. An Involved in PIP2 interaction motif is present at residues 84-100 (AVIRGKKGSGGITIKKT). The residue at position 114 (threonine 114) is a Phosphothreonine.

It belongs to the profilin family. Occurs in many kinds of cells as a complex with monomeric actin in a 1:1 ratio. Phosphorylated by MAP kinases.

Its subcellular location is the cytoplasm. The protein resides in the cytoskeleton. Binds to actin and affects the structure of the cytoskeleton. At high concentrations, profilin prevents the polymerization of actin, whereas it enhances it at low concentrations. In Olea europaea (Common olive), this protein is Profilin-1.